Here is a 186-residue protein sequence, read N- to C-terminus: Dynactin subunit 3 (186 aa).

Alanine 2 bears the N-acetylalanine mark.

It belongs to the dynactin subunit 3 family. In terms of assembly, subunit of dynactin, a multiprotein complex part of a tripartite complex with dynein and a adapter, such as BICDL1, BICD2 or HOOK3. The dynactin complex is built around ACTR1A/ACTB filament and consists of an actin-related filament composed of a shoulder domain, a pointed end and a barbed end. Its length is defined by its flexible shoulder domain. The soulder is composed of 2 DCTN1 subunits, 4 DCTN2 and 2 DCTN3. The 4 DCNT2 (via N-terminus) bind the ACTR1A filament and act as molecular rulers to determine the length. The pointed end is important for binding dynein-dynactin cargo adapters. Consists of 4 subunits: ACTR10, DCNT4, DCTN5 and DCTN6. The barbed end is composed of a CAPZA1:CAPZB heterodimers, which binds ACTR1A/ACTB filament and dynactin and stabilizes dynactin.

It localises to the cytoplasm. The protein resides in the cytoskeleton. Its subcellular location is the microtubule organizing center. It is found in the centrosome. The protein localises to the chromosome. It localises to the centromere. The protein resides in the kinetochore. Its subcellular location is the spindle. It is found in the cleavage furrow. The protein localises to the midbody. Part of the dynactin complex that activates the molecular motor dynein for ultra-processive transport along microtubules. Together with dynein is involved in spindle assembly and cytokinesis. The polypeptide is Dynactin subunit 3 (Sus scrofa (Pig)).